The chain runs to 258 residues: U6 snRNA phosphodiesterase 1 (258 aa).

The interval 1-20 (MALVDYGGSSSSASEDEDCT) is disordered. The Proton acceptor role is filled by H117. Residues 117 to 119 (HLS), Y200, and 202 to 208 (PASFHVS) contribute to the AMP site. UMP is bound by residues Y200 and 204-208 (SFHVS). H206 functions as the Proton donor in the catalytic mechanism.

The protein belongs to the 2H phosphoesterase superfamily. USB1 family.

The protein resides in the nucleus. The catalysed reaction is a 3'-end uridylyl-uridine-RNA = a 3'-end 2',3'-cyclophospho-uridine-RNA + uridine. 3'-5' RNA exonuclease that trims the 3' end of oligo(U) tracts of the pre-U6 small nuclear RNA (snRNA) molecule, leading to the formation of a mature U6 snRNA 3' end-terminated with a 2',3'-cyclic phosphate. Participates in the U6 snRNA 3' end processing that prevents U6 snRNA degradation. The protein is U6 snRNA phosphodiesterase 1 of Drosophila melanogaster (Fruit fly).